Consider the following 410-residue polypeptide: Multidrug resistance protein MdtM (410 aa).

Topologically, residues 1–11 (MPRFFTRHAAT) are cytoplasmic. A helical membrane pass occupies residues 12–32 (LFFPMALILYDFAAYLSTDLI). The Periplasmic segment spans residues 33–48 (QPGIINVVRDFNADVS). The chain crosses the membrane as a helical span at residues 49 to 69 (LAPAAVSLYLAGGMALQWLLG). At 70–78 (PLSDRIGRR) the chain is on the cytoplasmic side. Residues 79–99 (PVLITGALIFTLACAATMFTT) traverse the membrane as a helical segment. Residues 100–103 (SMTQ) are Periplasmic-facing. The chain crosses the membrane as a helical span at residues 104-124 (FLIARAIQGTSICFIATVGYV). Residues 125–140 (TVQEAFGQTKGIKLMA) lie on the Cytoplasmic side of the membrane. Residues 141–161 (IITSIVLIAPIIGPLSGAALM) traverse the membrane as a helical segment. At 162–167 (HFMHWK) the chain is on the periplasmic side. A helical transmembrane segment spans residues 168 to 188 (VLFAIIAVMGFISFVGLLLAM). Residues 189 to 216 (PETVKRGAVPFSAKSVLRDFRNVFCNRL) are Cytoplasmic-facing. A helical membrane pass occupies residues 217 to 237 (FLFGAATISLSYIPMMSWVAV). Over 238–251 (SPVILIDAGSLTTS) the chain is Periplasmic. The helical transmembrane segment at 252–272 (QFAWTQVPVFGAVIVANAIVA) threads the bilayer. Residues 273 to 282 (RFVKDPTEPR) are Cytoplasmic-facing. A helical membrane pass occupies residues 283-303 (FIWRAVPIQLVGLSLLIVGNL). Over 304–307 (LSPH) the chain is Periplasmic. A helical transmembrane segment spans residues 308–328 (VWLWSVLGTSLYAFGIGLIFP). Residues 329–348 (TLFRFTLFSNKLPKGTVSAS) are Cytoplasmic-facing. Residues 349–369 (LNMVILMVMSVSVEIGRWLWF) form a helical membrane-spanning segment. Topologically, residues 370-373 (NGGR) are periplasmic. Residues 374–394 (LPFHLLAVVAGVIVVFTLAGL) form a helical membrane-spanning segment. The Cytoplasmic portion of the chain corresponds to 395–410 (LNRVRQHQAAELVEEQ).

The protein belongs to the major facilitator superfamily. Monomer.

It is found in the cell inner membrane. It catalyses the reaction Na(+)(in) + 2 H(+)(out) = Na(+)(out) + 2 H(+)(in). The catalysed reaction is K(+)(in) + H(+)(out) = K(+)(out) + H(+)(in). Its activity is regulated as follows. Efflux is inhibited by the ionophore carbonyl cyanide 3-chlorophenylhydrazone (CCCP). Proton-dependent efflux pump. Confers resistance to a broad spectrum of chemically unrelated substrates. Overexpression confers resistance to acriflavine, chloramphenicol, norfloxacin, ethidium bromide and tetraphenylphosphonium bromide (TPP). Can also export a broad range of quaternary ammonium compounds (QACs) and contribute to the intrinsic resistance of E.coli to these antimicrobial compounds. In addition to its role in multidrug resistance, MdtM likely plays a physiological role in alkaline pH homeostasis and in resistance to bile salts. May function in alkaline pH homeostasis when millimolar concentrations of sodium or potassium are present in the growth medium. When overexpressed, can confer a tolerance to alkaline pH values up to 9.75. Probably acts as a low-affinity antiporter that catalyzes the exchange of internal Na(+) and K(+) cations for extracellular protons to maintain a stable internal pH, acid relative to outside, during exposure to alkaline environments. Can also catalyze Rb(+)/H(+) and Li(+)/H(+) antiport, but not Ca(2+)/H(+) exchange. The exact stoichiometry of antiport is unknown. Finally, it could contribute to bile salt resistance by catalyzing the transport of bile salts out of the cell cytoplasm. Mediates a bile salt/H(+) exchange driven by the electrochemical gradient. Binds to cholate and deoxycholate with micromolar affinity and catalyzes both cholate/H(+) and deoxycholate/H(+) exchange reactions. The polypeptide is Multidrug resistance protein MdtM (Escherichia coli (strain K12)).